The following is a 31-amino-acid chain: Photosystem II reaction center protein T (31 aa).

The chain crosses the membrane as a helical span at residues 3 to 23 (ALVYTFLLVGTLGIIFFAIFF).

The protein belongs to the PsbT family. PSII is composed of 1 copy each of membrane proteins PsbA, PsbB, PsbC, PsbD, PsbE, PsbF, PsbH, PsbI, PsbJ, PsbK, PsbL, PsbM, PsbT, PsbY, PsbZ, Psb30/Ycf12, at least 3 peripheral proteins of the oxygen-evolving complex and a large number of cofactors. It forms dimeric complexes.

It is found in the plastid. It localises to the chloroplast thylakoid membrane. Its function is as follows. Found at the monomer-monomer interface of the photosystem II (PS II) dimer, plays a role in assembly and dimerization of PSII. PSII is a light-driven water plastoquinone oxidoreductase, using light energy to abstract electrons from H(2)O, generating a proton gradient subsequently used for ATP formation. This chain is Photosystem II reaction center protein T, found in Chlorella vulgaris (Green alga).